We begin with the raw amino-acid sequence, 610 residues long: Elongation factor 4 (610 aa).

Residues 11–193 (EKIRNFSIIA…QIVEKVPAPT (183 aa)) form the tr-type G domain. GTP is bound by residues 23 to 28 (DHGKST) and 140 to 143 (NKID).

Belongs to the TRAFAC class translation factor GTPase superfamily. Classic translation factor GTPase family. LepA subfamily.

Its subcellular location is the cell membrane. It carries out the reaction GTP + H2O = GDP + phosphate + H(+). In terms of biological role, required for accurate and efficient protein synthesis under certain stress conditions. May act as a fidelity factor of the translation reaction, by catalyzing a one-codon backward translocation of tRNAs on improperly translocated ribosomes. Back-translocation proceeds from a post-translocation (POST) complex to a pre-translocation (PRE) complex, thus giving elongation factor G a second chance to translocate the tRNAs correctly. Binds to ribosomes in a GTP-dependent manner. The polypeptide is Elongation factor 4 (Streptococcus suis (strain 98HAH33)).